The chain runs to 68 residues: Small proline-rich protein 2K (68 aa).

The 1; truncated repeat unit spans residues 21–26 (PKPCSP). The segment at 21–65 (PKPCSPPKCPEPCPPPKCPETCPPQPCQRKCPPVLEAPCQQKCPS) is 3.5 X 9 AA approximate tandem repeats. 3 tandem repeats follow at residues 27–35 (PKCPEPCPP), 36–44 (PKCPETCPP), and 45–53 (QPCQRKCPP).

It belongs to the cornifin (SPRR) family. In terms of tissue distribution, not expressed in uterus.

Its subcellular location is the cytoplasm. Cross-linked envelope protein of keratinocytes. It is a keratinocyte protein that first appears in the cell cytosol, but ultimately becomes cross-linked to membrane proteins by transglutaminase. All that results in the formation of an insoluble envelope beneath the plasma membrane. In Mus musculus (Mouse), this protein is Small proline-rich protein 2K (Sprr2k).